The chain runs to 88 residues: Ribonuclease P protein component 1 (88 aa).

The protein belongs to the eukaryotic/archaeal RNase P protein component 1 family. As to quaternary structure, consists of a catalytic RNA component and at least 4-5 protein subunits.

It localises to the cytoplasm. The enzyme catalyses Endonucleolytic cleavage of RNA, removing 5'-extranucleotides from tRNA precursor.. Its function is as follows. Part of ribonuclease P, a protein complex that generates mature tRNA molecules by cleaving their 5'-ends. The sequence is that of Ribonuclease P protein component 1 from Nitrosopumilus maritimus (strain SCM1).